We begin with the raw amino-acid sequence, 365 residues long: MLLSLVLHTYSMRYLLPSVLLLGSAPTYLLAWTLWRVLSALMPARLYQRVDDRLYCVYQNMVLFFFENYTGVQILLYGDLPKNKENVIYLANHQSTVDWIVADMLAARQDALGHVRYVLKDKLKWLPLYGFYFAQHGGIYVKRSAKFNDKEMRSKLQSYVNAGTPMYLVIFPEGTRYNATYTKLLSASQAFAAQRGLAVLKHVLTPRIKATHVAFDSMKSHLDAIYDVTVVYEGNEKGSGKYSNPPSMTEFLCKQCPKLHIHFDRIDRNEVPEEQEHMKKWLHERFEIKDRLLIEFYDSPDPERRNKFPGKSVHSRLSVKKTLPSVLILGSLTAVMLMTESGRKLYMGTWLYGTLLGCLWFVIKA.

Residues 15–35 form a helical membrane-spanning segment; that stretch reads LLPSVLLLGSAPTYLLAWTLW. The HXXXXD motif signature appears at 93 to 98; the sequence is HQSTVD. A helical membrane pass occupies residues 345-365; that stretch reads LYMGTWLYGTLLGCLWFVIKA.

This sequence belongs to the 1-acyl-sn-glycerol-3-phosphate acyltransferase family. As to expression, widely expressed.

The protein resides in the endoplasmic reticulum membrane. It localises to the nucleus envelope. It is found in the mitochondrion. The catalysed reaction is a 1-acyl-sn-glycero-3-phosphate + an acyl-CoA = a 1,2-diacyl-sn-glycero-3-phosphate + CoA. It catalyses the reaction 1-(9Z-octadecenoyl)-sn-glycero-3-phosphate + tetradecanoyl-CoA = 1-(9Z)-octadecenoyl-2-tetradecanoyl-sn-glycero-3-phosphate + CoA. It carries out the reaction pentadecanoyl-CoA + 1-(9Z-octadecenoyl)-sn-glycero-3-phosphate = 1-(9Z)-octadecenoyl-2-pentadecanoyl-sn-glycero-3-phosphate + CoA. The enzyme catalyses 1-(9Z-octadecenoyl)-sn-glycero-3-phosphate + octadecanoyl-CoA = 1-(9Z-octadecenoyl)-2-octadecanoyl-sn-glycero-3-phosphate + CoA. The catalysed reaction is nonadecanoyl-CoA + 1-(9Z-octadecenoyl)-sn-glycero-3-phosphate = 1-(9Z)-octadecenoyl-2-nonadecanoyl-sn-glycero-3-phosphate + CoA. It catalyses the reaction 1-(9Z-octadecenoyl)-sn-glycero-3-phosphoethanolamine + (9Z)-octadecenoyl-CoA = 1,2-di-(9Z-octadecenoyl)-sn-glycero-3-phosphoethanolamine + CoA. It carries out the reaction 1-(9Z-octadecenoyl)-sn-glycero-3-phosphocholine + (9Z)-octadecenoyl-CoA = 1,2-di-(9Z-octadecenoyl)-sn-glycero-3-phosphocholine + CoA. The enzyme catalyses 1-(9Z-octadecenoyl)-sn-glycero-3-phospho-(1D-myo-inositol) + (5Z,8Z,11Z,14Z)-eicosatetraenoyl-CoA = 1-(9Z-octadecenoyl)-2-(5Z,8Z,11Z,14Z-eicosatetraenoyl)-sn-glycero-3-phospho-1D-myo-inositol + CoA. The catalysed reaction is 1-(9Z-octadecenoyl)-sn-glycero-3-phospho-L-serine + (9Z)-octadecenoyl-CoA = 1,2-di-(9Z)-octadecenoyl-sn-glycero-3-phospho-L-serine + CoA. It catalyses the reaction 1-(9Z-octadecenoyl)-sn-glycero-3-phospho-L-serine + (5Z,8Z,11Z,14Z)-eicosatetraenoyl-CoA = 1-(9Z-octadecenoyl)-2-(5Z,8Z,11Z,14Z-eicosatetraenoyl)-sn-glycero-3-phospho-L-serine + CoA. It carries out the reaction 1-hexadecanoyl-sn-glycero-3-phosphate + (9Z)-octadecenoyl-CoA = 1-hexadecanoyl-2-(9Z-octadecenoyl)-sn-glycero-3-phosphate + CoA. The enzyme catalyses 1-heptadecanoyl-sn-glycero-3-phosphate + (9Z)-octadecenoyl-CoA = 1-heptadecanoyl-2-(9Z)-octadecenoyl-sn-glycero-3-phosphate + CoA. The catalysed reaction is 1-(5Z,8Z,11Z,14Z-eicosatetraenoyl)-sn-glycero-3-phosphate + (9Z)-octadecenoyl-CoA = 1-(5Z,8Z,11Z,14Z)-eicosatetraenoyl-2-(9Z)-octadecenoyl-sn-glycero-3-phosphate + CoA. It catalyses the reaction 1-octadecanoyl-sn-glycero-3-phosphate + (9Z)-octadecenoyl-CoA = 1-octadecanoyl-2-(9Z-octadecenoyl)-sn-glycero-3-phosphate + CoA. It carries out the reaction 1-(9Z-octadecenoyl)-sn-glycero-3-phosphate + (5Z,8Z,11Z,14Z)-eicosatetraenoyl-CoA = 1-(9Z)-octadecenoyl-2-(5Z,8Z,11Z,14Z)-eicosatetraenoyl-sn-glycero-3-phosphate + CoA. The enzyme catalyses heptadecanoyl-CoA + 1-(9Z-octadecenoyl)-sn-glycero-3-phosphate = 1-(9Z)-octadecenoyl-2-heptadecanoyl-sn-glycero-3-phosphate + CoA. The catalysed reaction is 1-(9Z-octadecenoyl)-sn-glycero-3-phosphocholine + (5Z,8Z,11Z,14Z)-eicosatetraenoyl-CoA = 1-(9Z)-octadecenoyl-2-(5Z,8Z,11Z,14Z)-icosatetraenoyl-sn-glycero-3-phosphocholine + CoA. It catalyses the reaction 1-(9Z-octadecenoyl)-sn-glycero-3-phosphate + (9Z)-octadecenoyl-CoA = 1,2-di-(9Z-octadecenoyl)-sn-glycero-3-phosphate + CoA. It carries out the reaction 1-(9Z-octadecenoyl)-sn-glycero-3-phosphate + hexadecanoyl-CoA = 1-hexadecanoyl-2-(9Z-octadecenoyl)-sn-glycero-3-phosphate + CoA. It functions in the pathway phospholipid metabolism; CDP-diacylglycerol biosynthesis; CDP-diacylglycerol from sn-glycerol 3-phosphate: step 2/3. Converts 1-acyl-sn-glycerol-3-phosphate (lysophosphatidic acid or LPA) into 1,2-diacyl-sn-glycerol-3-phosphate (phosphatidic acid or PA) by incorporating an acyl moiety at the sn-2 position of the glycerol backbone. Acts on LPA containing saturated or unsaturated fatty acids C15:0-C20:4 at the sn-1 position using C18:1-CoA as the acyl donor. Also acts on lysophosphatidylethanolamine using oleoyl-CoA, but not arachidonoyl-CoA, and lysophosphatidylinositol using arachidonoyl-CoA, but not oleoyl-CoA. Activity toward lysophosphatidylglycerol not detectable. The polypeptide is 1-acyl-sn-glycerol-3-phosphate acyltransferase epsilon (Agpat5) (Mus musculus (Mouse)).